The sequence spans 313 residues: WD repeat-containing protein 82 (313 aa).

6 WD repeats span residues 19–58, 105–144, 146–184, 192–231, 236–276, and 280–313; these read ENSD…PKRT, GHSK…CQGL, HLQG…KGPF, DRTC…VMHT, ANSK…KVAV, and KHTG…TIDD.

It belongs to the WD repeat SWD2 family. Component of the SET1/COMPASS complex, at least composed of the catalytic subunit (SETD1A or SETD1B), WDR5, WDR82, RBBP5, ASH2L/ASH2, CXXC1/CFP1, HCFC1 and DPY30. Component of the PNUTS-PP1 phosphatase complex, composed of PPP1R10/PNUTS, TOX4, WDR82, and PPP1CA or PPP1CB or PPP1CC. Associated with multiple protein complexes including an RNA polymerase II complex, MLL3/MLL4 complex and a chaperonin-containing TCP1 complex. Interacts with SETD1B (via N-terminal region); the interaction is direct. Interacts with SETD1A (via N-terminal region); the interaction is direct. Interacts with CUL4B. Interacts with RBBP5. Interacts with POLR2B. Interacts with hyperphosphorylated C-terminal domain (CTD) of RNA polymerase II large subunit (POLR2A). Binds specifically to CTD heptad repeats phosphorylated on 'Ser-5' of each heptad. SETD1A enhances its interaction with POLR2A. Interacts with PPP1R10/PNUTS. Interacts with PPP1CA in the presence of PPP1R10/PNUTS. Interacts with ZC3H4; interaction is independent of the SET1 complex and promotes transcription termination of long non-coding RNAs (lncRNAs).

Its subcellular location is the nucleus. The protein localises to the chromosome. The protein resides in the cytoplasm. Functionally, regulatory component of the SET1/COMPASS complex implicated in the tethering of this complex to transcriptional start sites of active genes. Facilitates histone H3 'Lys-4' methylation (H3K4me) via recruitment of the SETD1A or SETD1B to the 'Ser-5' phosphorylated C-terminal domain (CTD) of RNA polymerase II large subunit (POLR2A). Component of the PNUTS-PP1 protein phosphatase complex, a protein phosphatase 1 (PP1) complex that promotes RNA polymerase II transcription pause-release, allowing transcription elongation. PNUTS-PP1 also plays a role in the control of chromatin structure and cell cycle progression during the transition from mitosis into interphase. Together with ZC3H4, but independently of the SET1 complex, part of a transcription termination checkpoint that promotes transcription termination of long non-coding RNAs (lncRNAs). The transcription termination checkpoint is activated by the inefficiently spliced first exon of lncRNAs and promotes transcription termination of lncRNAs and their subsequent degradation by the exosome. The polypeptide is WD repeat-containing protein 82 (Homo sapiens (Human)).